A 638-amino-acid chain; its full sequence is Factor of DNA methylation 3 (638 aa).

Residues 318–497 are a coiled coil; sequence FNRIFADHEK…RALISNLRDM (180 aa).

In terms of biological role, acts in association with FDM4 and FDM5 for RNA-directed DNA methylation (RdDM). This Arabidopsis thaliana (Mouse-ear cress) protein is Factor of DNA methylation 3.